We begin with the raw amino-acid sequence, 185 residues long: GTP cyclohydrolase 1 (185 aa).

Zn(2+) contacts are provided by Cys75, His78, and Cys146.

The protein belongs to the GTP cyclohydrolase I family. As to quaternary structure, toroid-shaped homodecamer, composed of two pentamers of five dimers.

It catalyses the reaction GTP + H2O = 7,8-dihydroneopterin 3'-triphosphate + formate + H(+). The protein operates within cofactor biosynthesis; 7,8-dihydroneopterin triphosphate biosynthesis; 7,8-dihydroneopterin triphosphate from GTP: step 1/1. In Alkalilimnicola ehrlichii (strain ATCC BAA-1101 / DSM 17681 / MLHE-1), this protein is GTP cyclohydrolase 1.